The following is a 484-amino-acid chain: Putative sodium/proton-dependent alanine carrier protein YrbD (484 aa).

Helical transmembrane passes span Val-11 to Met-31, Ala-66 to Pro-88, Phe-92 to Ile-114, Trp-139 to Val-159, Phe-172 to Phe-192, Ile-205 to Val-225, Ser-238 to Val-258, Ala-292 to Phe-312, Gly-350 to Ala-370, Trp-390 to Thr-410, and Ala-416 to Leu-436.

Belongs to the alanine or glycine:cation symporter (AGCS) (TC 2.A.25) family.

It localises to the cell membrane. This Bacillus subtilis (strain 168) protein is Putative sodium/proton-dependent alanine carrier protein YrbD (yrbD).